We begin with the raw amino-acid sequence, 274 residues long: MQFSKMHGLGNDFMVIDGVTQNVYLTEEVIRKLADRHRGVGFDQLLLVEPPYDPELDFHYRIFNADGSEVAQCGNGARCFARFVTLKGLTNKQDIHVSTAKGKMVLTLKDEEKVRVNMGEPIWEPAQVPFTANKFEKNYILRTDLQTVLCGVVSMGNPHCVLQVEDINLTPVNELGPLLENHERFPERANIGFMQVVNRNHIKLRVFERGAGETQACGSGACGAVAVGIMQGVLDNNVQVDLSGGSLQIEWEGVGHPLYMTGDATHIYDGFIKL.

Positions 11, 44, and 64 each coordinate substrate. Cys-73 functions as the Proton donor in the catalytic mechanism. Residues 74–75, Asn-157, Asn-190, and 208–209 contribute to the substrate site; these read GN and ER. Catalysis depends on Cys-217, which acts as the Proton acceptor. Substrate is bound at residue 218 to 219; it reads GS.

This sequence belongs to the diaminopimelate epimerase family. Homodimer.

It localises to the cytoplasm. It catalyses the reaction (2S,6S)-2,6-diaminopimelate = meso-2,6-diaminopimelate. It functions in the pathway amino-acid biosynthesis; L-lysine biosynthesis via DAP pathway; DL-2,6-diaminopimelate from LL-2,6-diaminopimelate: step 1/1. Catalyzes the stereoinversion of LL-2,6-diaminopimelate (L,L-DAP) to meso-diaminopimelate (meso-DAP), a precursor of L-lysine and an essential component of the bacterial peptidoglycan. The sequence is that of Diaminopimelate epimerase from Actinobacillus pleuropneumoniae serotype 3 (strain JL03).